Consider the following 526-residue polypeptide: MTIPTSFEMLKGMHIKDAFLLIAMLYLGYLLCICFYNIYLHPLRHIPGSKLAVMGPYLEFYHEVIRQGQYLWEIEKMHDKYGPIVRVNEREIHIRDSSYYHTIYAAGSRKTNKDAATVGAFDVPNSTAATVDHDQHRARRGYLNPYFSKRSLANLEPTIHERISKLLNRLEQHQNNDDIITLDGIFSALTADVICSRFYGKHFDYLSIPDYHFVVRDGFQGLTKLYHLGRFLPTLVTILKCLPQQIIRLILPNLADLIVMRDEIQANGIAQFTSSQTADSKASALVGALGDKNIPPHERTVARLLDEGTVFLFAGTETTSRTLAVTMFYLLTNPDCLKKLRAELDTLPSTEDYQHSLSTLESLPYLSGVVHEGLRLAFGPITRSARVPMNVDLQYKEYTIPAGTPLSMSTYFVHTDKELYPEPEKFKPERWIQAAEENIPLKKFLTNFSQGSRQCIGISMSFAEMYLTISRVARAYNFELYETTAADLDMTYARIVPYPKEIPGKTEGLGEIRVKIVGKNHSQIEE.

The helical transmembrane segment at 18–38 threads the bilayer; that stretch reads AFLLIAMLYLGYLLCICFYNI. N-linked (GlcNAc...) asparagine glycans are attached at residues N125 and N447. Heme is bound at residue C455. N-linked (GlcNAc...) asparagine glycosylation occurs at N520.

The protein belongs to the cytochrome P450 family. It depends on heme as a cofactor.

It localises to the membrane. Its pathway is mycotoxin biosynthesis. Its function is as follows. Cytochrome P450 monooxygenase; part of the satratoxin SC2 cluster involved in the biosynthesis of satratoxins, trichothecene mycotoxins that are associated with human food poisonings. Satratoxins are suggested to be made by products of multiple gene clusters (SC1, SC2 and SC3) that encode 21 proteins in all, including polyketide synthases, acetyltransferases, and other enzymes expected to modify the trichothecene skeleton. SC1 encodes 10 proteins, SAT1 to SAT10. The largest are SAT8, which encodes a putative polyketide synthase (PKS) with a conventional non-reducing architecture, and SAT10, a putative protein containing four ankyrin repeats and thus may be involved in protein scaffolding. The putative short-chain reductase SAT3 may assist the PKS in some capacity. SAT6 contains a secretory lipase domain and acts probably as a trichothecene esterase. SAT5 encodes a putative acetyltransferase, and so, with SAT6, may affect endogenous protection from toxicity. The probable transcription factor SAT9 may regulate the expression of the SC1 cluster. SC2 encodes proteins SAT11 to SAT16, the largest of which encodes the putative reducing PKS SAT13. SAT11 is a cytochrome P450 monooxygenase, while SAT14 and SAT16 are probable acetyltransferases. The SC2 cluster may be regulated by the transcription factor SAT15. SC3 is a small cluster that encodes 5 proteins, SAT17 to SAT21. SAT21 is a putative MFS-type transporter which may have a role in exporting secondary metabolites. The four other proteins putatively encoded in SC3 include the taurine hydroxylase-like protein SAT17, the O-methyltransferase SAT18, the acetyltransferase SAT19, and the Cys6-type zinc finger SAT20, the latter being probably involved in regulation of SC3 expression. The protein is Cytochrome P450 monooxygenase SAT11 of Stachybotrys chartarum (strain CBS 109288 / IBT 7711) (Toxic black mold).